The following is a 327-amino-acid chain: Probable cell division protein WhiA (327 aa).

The H-T-H motif DNA-binding region spans 275 to 308 (SLEELGRLADPQMTKDAVAGRIRRLLTMADKRAE).

The protein belongs to the WhiA family.

Functionally, involved in cell division and chromosome segregation. The chain is Probable cell division protein WhiA from Corynebacterium glutamicum (strain ATCC 13032 / DSM 20300 / JCM 1318 / BCRC 11384 / CCUG 27702 / LMG 3730 / NBRC 12168 / NCIMB 10025 / NRRL B-2784 / 534).